Consider the following 194-residue polypeptide: Orotate phosphoribosyltransferase (194 aa).

117–125 (EDIVTTGLS) serves as a coordination point for 5-phospho-alpha-D-ribose 1-diphosphate. Positions 121 and 149 each coordinate orotate.

The protein belongs to the purine/pyrimidine phosphoribosyltransferase family. PyrE subfamily. As to quaternary structure, homodimer. Mg(2+) serves as cofactor.

It carries out the reaction orotidine 5'-phosphate + diphosphate = orotate + 5-phospho-alpha-D-ribose 1-diphosphate. The protein operates within pyrimidine metabolism; UMP biosynthesis via de novo pathway; UMP from orotate: step 1/2. Functionally, catalyzes the transfer of a ribosyl phosphate group from 5-phosphoribose 1-diphosphate to orotate, leading to the formation of orotidine monophosphate (OMP). The chain is Orotate phosphoribosyltransferase from Parvibaculum lavamentivorans (strain DS-1 / DSM 13023 / NCIMB 13966).